Here is a 150-residue protein sequence, read N- to C-terminus: Globin-2 A chain (150 aa).

Blocked amino end (Val) is present on valine 2. Positions cysteine 10 to leucine 150 constitute a Globin domain. Histidine 102 provides a ligand contact to heme b.

The protein belongs to the globin family. In terms of assembly, heterotetramer of two alpha chains and two beta chains.

In Anadara inaequivalvis (Inequivalve ark), this protein is Globin-2 A chain.